A 211-amino-acid chain; its full sequence is MRKYIKIGVAGPVGAGKTALIERLTREIASKYSVAVITNDIYTQEDAEFLTKNSLLPPERIMGVETGGCPHTAIREDASMNLEAVDEMVARFPEVELIFIESGGDNLSATFSPDLADVTIFVIDVAQGEKIPRKGGPGITRSDLLVINKTDLAPFVGADLSVMERDARRMRNGQPFIFTNLMKNENLDGVIGWIEKYALLKNIEDPASLVR.

A GTP-binding site is contributed by Gly11 to Thr18.

This sequence belongs to the SIMIBI class G3E GTPase family. UreG subfamily. As to quaternary structure, homodimer. UreD, UreF and UreG form a complex that acts as a GTP-hydrolysis-dependent molecular chaperone, activating the urease apoprotein by helping to assemble the nickel containing metallocenter of UreC. The UreE protein probably delivers the nickel.

It is found in the cytoplasm. Its function is as follows. Facilitates the functional incorporation of the urease nickel metallocenter. This process requires GTP hydrolysis, probably effectuated by UreG. The chain is Urease accessory protein UreG from Actinobacillus pleuropneumoniae serotype 5b (strain L20).